We begin with the raw amino-acid sequence, 210 residues long: LexA repressor (210 aa).

The segment at residues 31–51 is a DNA-binding region (H-T-H motif); that stretch reads RAEISRELGFRSPNAAEEHLK. Catalysis depends on for autocatalytic cleavage activity residues Ser126 and Lys163.

Belongs to the peptidase S24 family. In terms of assembly, homodimer.

It catalyses the reaction Hydrolysis of Ala-|-Gly bond in repressor LexA.. Represses a number of genes involved in the response to DNA damage (SOS response), including recA and lexA. In the presence of single-stranded DNA, RecA interacts with LexA causing an autocatalytic cleavage which disrupts the DNA-binding part of LexA, leading to derepression of the SOS regulon and eventually DNA repair. The polypeptide is LexA repressor (Actinobacillus succinogenes (strain ATCC 55618 / DSM 22257 / CCUG 43843 / 130Z)).